Here is a 108-residue protein sequence, read N- to C-terminus: Nucleoid-associated protein BARBAKC583_1239 (108 aa).

Belongs to the YbaB/EbfC family. In terms of assembly, homodimer.

It localises to the cytoplasm. The protein resides in the nucleoid. Binds to DNA and alters its conformation. May be involved in regulation of gene expression, nucleoid organization and DNA protection. This chain is Nucleoid-associated protein BARBAKC583_1239, found in Bartonella bacilliformis (strain ATCC 35685 / KC583 / Herrer 020/F12,63).